We begin with the raw amino-acid sequence, 77 residues long: Defensin-B6 (77 aa).

Positions 1–20 (MKTLFFLSVFIFLLLHLSPG) are cleaved as a signal peptide. 3 disulfide bridges follow: Cys43-Cys70, Cys50-Cys64, and Cys54-Cys71.

This sequence belongs to the beta-defensin family. In terms of tissue distribution, lowly expressed in spleen, kidney and lung.

The protein resides in the secreted. Has antimicrobial activity. This chain is Defensin-B6, found in Ornithorhynchus anatinus (Duckbill platypus).